Here is an 870-residue protein sequence, read N- to C-terminus: MLGGIIGGLTGNKNARLKGSLVLMRKNALDINDFGATVIDGISEFLGRGVTCQLVSSSLVDPNNGNRGRVGTEASLEQWLTSLPSLTTGESKFGVTFEWEVEKMGIPGAIIVKNNHAAEFFLKTITLDNVPGHGAVVFVANSWIYPASKYRYNRVFFSNDTSLPSKMPAALKPYRDDELRNLRGDDQQGPYQEHDRVYRYDVYNDLGEPDSGNPRPVLGGSPDRPYPRRGRTGRKPTKTDPTAESRLSLLENIYVPRDERFGHLKMADFLGYSIKALVDGIVPAIRTYVDLTPGEFDSFKDILKLYEGGLKLPSIPALEELRKRFPLQLVKDLIPAGGDYLLKLPMPHVIREDKKAWMTDDEFAREILAGVNPMVIARLTEFPPRSRLDPARYGDQTSTITAAHVERGLEGLTVQQAIDGNLLYVVDHHDHFMPYLLDINSLDDNFIYATRTLLFLRGDGTLAPLAIELSLPHLQDDGLITARSTVYTPAARGGTGAGAVEWWVWQLAKAYVNVNDYCWHQLISHWLNTHAVMEPFVIATNRQLSVAHPVHKLLLPHYRDTMTINALARQTLINGGGIFEMTVFPRKHALAMSSAFYKDWSFADQALPDDLVKRGVAVPDPASPYKVRLLIEDYPYANDGLAVWHAIEQWATEYLAIYYPNDGVLQGDAELQAWWKEVREVGHGDIKDATWWPEMKTVAELVKACATIIWIGSALHAAVNFGQYPYAGYLPNRPSVSRRPMPEPGTKEYDELARDPEKVFVRTITKQMQAIVGISLLEILSKHSSDEVYLGQRDTPEWTSDAKALEAFKRFGARLTEIESRVVAMNKDPHRKNRVGPTNFPYTLLYPNTSDLKGDAAGLSARGIPNSISI.

In terms of domain architecture, PLAT spans 32–158 (NDFGATVIDG…KYRYNRVFFS (127 aa)). In terms of domain architecture, Lipoxygenase spans 161–870 (TSLPSKMPAA…ARGIPNSISI (710 aa)). The segment at 203-243 (YNDLGEPDSGNPRPVLGGSPDRPYPRRGRTGRKPTKTDPTA) is disordered. A compositionally biased stretch (basic residues) spans 227–236 (PRRGRTGRKP). The Fe cation site is built by histidine 525, histidine 530, histidine 716, asparagine 720, and isoleucine 870.

Belongs to the lipoxygenase family. As to quaternary structure, monomer. The cofactor is Fe cation.

The protein localises to the cytoplasm. The enzyme catalyses (9Z,12Z)-octadecadienoate + O2 = (9S)-hydroperoxy-(10E,12Z)-octadecadienoate. It functions in the pathway lipid metabolism; oxylipin biosynthesis. Its function is as follows. Plant lipoxygenase may be involved in a number of diverse aspects of plant physiology including growth and development, pest resistance, and senescence or responses to wounding. Catalyzes the hydroperoxidation of lipids containing a cis,cis-1,4-pentadiene structure. In Oryza sativa subsp. japonica (Rice), this protein is Linoleate 9S-lipoxygenase 2 (LOX1.1).